The following is a 270-amino-acid chain: MMVLEQSETSRLGPVFDSCRADNRAALIGYLPTGYPDVPTSVDAMIELVESGCDIIEVGVPYSDPGMDGPTIARATEVALRGGVRVRDTLAAVEAISQAGGRAVVMTYWNPVLRYGVCAFARDLESAGGHGLVTPDLIPDEARQWIAASEKHRLDRIFLVAPSSTPHRLVTTVGASRGFVYAVSVMGVTGARDAVSQVVPELVARVKAVSDIAVGVGLGVRSREQAAQIGGYADGVIVGSALVSALGDGLPRLRALAEELAAGVRQRTFM.

Catalysis depends on proton acceptor residues E57 and D68.

This sequence belongs to the TrpA family. As to quaternary structure, tetramer of two alpha and two beta chains.

The catalysed reaction is (1S,2R)-1-C-(indol-3-yl)glycerol 3-phosphate + L-serine = D-glyceraldehyde 3-phosphate + L-tryptophan + H2O. It participates in amino-acid biosynthesis; L-tryptophan biosynthesis; L-tryptophan from chorismate: step 5/5. Its function is as follows. The alpha subunit is responsible for the aldol cleavage of indoleglycerol phosphate to indole and glyceraldehyde 3-phosphate. In Mycobacterium leprae (strain Br4923), this protein is Tryptophan synthase alpha chain.